We begin with the raw amino-acid sequence, 319 residues long: Cutinase cut1 (319 aa).

Positions Met1 to Ala58 are cleaved as a signal peptide. A poly(ethylene terephthalate)-binding site is contributed by Tyr118. Ser188 serves as the catalytic Nucleophile. 2 residues coordinate poly(ethylene terephthalate): Met189 and Trp213. Active-site charge relay system residues include Asp234 and His266. Cys299 and Cys317 form a disulfide bridge.

The protein belongs to the AB hydrolase superfamily.

It is found in the secreted. It localises to the periplasm. It carries out the reaction an acetyl ester + H2O = an aliphatic alcohol + acetate + H(+). It catalyses the reaction a butanoate ester + H2O = an aliphatic alcohol + butanoate + H(+). The enzyme catalyses pentanoate ester + H2O = pentanoate + an aliphatic alcohol + H(+). The catalysed reaction is an octanoate ester + H2O = an aliphatic alcohol + octanoate + H(+). It carries out the reaction decanoate ester + H2O = decanoate + an aliphatic alcohol + H(+). It catalyses the reaction a dodecanoate ester + H2O = an aliphatic alcohol + dodecanoate + H(+). The enzyme catalyses a tetradecanoate ester + H2O = an aliphatic alcohol + tetradecanoate + H(+). The catalysed reaction is hexadecanoate ester + H2O = an aliphatic alcohol + hexadecanoate + H(+). It carries out the reaction cutin + H2O = cutin monomers.. It catalyses the reaction (ethylene terephthalate)(n) + H2O = (ethylene terephthalate)(n-1) + 4-[(2-hydroxyethoxy)carbonyl]benzoate + H(+). Activated by magnesium ions. Activated by calcium ions. Functionally, catalyzes the hydrolysis of cutin, a polyester that forms the structure of plant cuticle. Shows esterase activity towards p-nitrophenol-linked aliphatic esters (pNP-aliphatic esters). Capable of degrading the plastic poly(ethylene terephthalate) (PET), the most abundant polyester plastic in the world. This chain is Cutinase cut1, found in Thermobifida fusca (Thermomonospora fusca).